Reading from the N-terminus, the 239-residue chain is Orotidine 5'-phosphate decarboxylase (239 aa).

Substrate is bound by residues Asp-10, Lys-32, 59–68 (DLKLHDIPNT), Thr-122, Arg-184, Gln-193, Gly-213, and Arg-214. Residue Lys-61 is the Proton donor of the active site.

This sequence belongs to the OMP decarboxylase family. Type 1 subfamily. As to quaternary structure, homodimer.

The enzyme catalyses orotidine 5'-phosphate + H(+) = UMP + CO2. It participates in pyrimidine metabolism; UMP biosynthesis via de novo pathway; UMP from orotate: step 2/2. In terms of biological role, catalyzes the decarboxylation of orotidine 5'-monophosphate (OMP) to uridine 5'-monophosphate (UMP). This is Orotidine 5'-phosphate decarboxylase from Shouchella clausii (strain KSM-K16) (Alkalihalobacillus clausii).